The chain runs to 513 residues: uncharacterized protein (513 aa).

13 consecutive transmembrane segments (helical) span residues 3 to 23 (MTAFLLFLAIVGLTLIITYFA), 47 to 67 (LAIAGDYMSAASFLGIAGMIA), 71 to 91 (FDGFFYSIGFLVAYLVVLYIV), 129 to 149 (TFYMIAQLVGAGALIKLLLGL), 153 to 173 (AAVLIVGVLMTIYVVFGGMIA), 177 to 197 (VQIIKAVLLMAGTLVISIIVF), 233 to 253 (ETLSLNLALVLGTAGLPHILI), 273 to 293 (WIIGVFYIMTVFLGFGAAAFV), 320 to 340 (FLFAFVSAIAFATILAVVTGL), 374 to 394 (ASVAVSVLSILLAIFAQSLNV), 395 to 415 (AFLVALAFAVAASANLPLIVF), 424 to 444 (ASGALWGSLTGLISALVLVSM), and 462 to 482 (LIPLSNPGIISIPLGFLGAWL).

This sequence belongs to the sodium:solute symporter (SSF) (TC 2.A.21) family.

The protein resides in the cell membrane. This is an uncharacterized protein from Bacillus subtilis (strain 168).